We begin with the raw amino-acid sequence, 1009 residues long: Type VII secretion system accessory factor EsaA (1009 aa).

The chain crosses the membrane as a helical span at residues 7–27; it reads IYALIVTLIIIIAIVSMIFFV. Basic and acidic residues predominate over residues 680–697; sequence TFAEEPQEPKIDKGKNDE. The interval 680-707 is disordered; that stretch reads TFAEEPQEPKIDKGKNDEFNTMSSNLDK. Transmembrane regions (helical) follow at residues 822–842, 869–889, 903–923, 928–948, and 979–999; these read ISPTLFVLLMYLLSMITAYIF, VITSGVIGTTGLVEGLIVGLI, KFILMVILTMMVFVLINTYLL, SIGMFLMIAALGLYFVAMNNL, and IGLVLVILTVLVIIGFVLNMF.

This sequence belongs to the EsaA family. Homodimer. Interacts with EssB.

The protein localises to the cell membrane. Its function is as follows. Component of the type VII secretion system (Ess). Provides together with EssB and other components such as EssC and EssE a secretion platform across the cytoplasmic membrane in the host. The sequence is that of Type VII secretion system accessory factor EsaA from Staphylococcus aureus (strain COL).